Consider the following 307-residue polypeptide: Serine/threonine-protein phosphatase PP2A-2 catalytic subunit (307 aa).

Mn(2+) is bound by residues aspartate 55, histidine 57, aspartate 83, and asparagine 115. Residue histidine 116 is the Proton donor of the active site. Positions 165 and 239 each coordinate Mn(2+).

The protein belongs to the PPP phosphatase family. PP-2A subfamily. Mn(2+) serves as cofactor.

Its subcellular location is the cytoplasm. It carries out the reaction O-phospho-L-seryl-[protein] + H2O = L-seryl-[protein] + phosphate. The enzyme catalyses O-phospho-L-threonyl-[protein] + H2O = L-threonyl-[protein] + phosphate. The sequence is that of Serine/threonine-protein phosphatase PP2A-2 catalytic subunit (PP2A2) from Oryza sativa subsp. indica (Rice).